A 689-amino-acid polypeptide reads, in one-letter code: UvrABC system protein B (689 aa).

The segment at 1–26 (MSDASGPLQPDRPEADVPFRVEAPFD) is disordered. Residues 40–422 (AGYEQGAQQQ…ERAQSANVVE (383 aa)) form the Helicase ATP-binding domain. Residue 53 to 60 (GVTGSGKT) coordinates ATP. The Beta-hairpin motif lies at 106–129 (YYNYYQPEAYVEQTDKYIEKDASI). The 163-residue stretch at 443 to 605 (QVEDLMDRID…TTPTTIEKAV (163 aa)) folds into the Helicase C-terminal domain. Residues 632–667 (ALLVEDLEARMEDAASNLEFELAADIRDRMRELREA) form the UVR domain. The segment at 668–689 (FDLDGGDAPEDPGGVAPETEDW) is disordered.

This sequence belongs to the UvrB family. Forms a heterotetramer with UvrA during the search for lesions. Interacts with UvrC in an incision complex.

The protein resides in the cytoplasm. Its function is as follows. The UvrABC repair system catalyzes the recognition and processing of DNA lesions. A damage recognition complex composed of 2 UvrA and 2 UvrB subunits scans DNA for abnormalities. Upon binding of the UvrA(2)B(2) complex to a putative damaged site, the DNA wraps around one UvrB monomer. DNA wrap is dependent on ATP binding by UvrB and probably causes local melting of the DNA helix, facilitating insertion of UvrB beta-hairpin between the DNA strands. Then UvrB probes one DNA strand for the presence of a lesion. If a lesion is found the UvrA subunits dissociate and the UvrB-DNA preincision complex is formed. This complex is subsequently bound by UvrC and the second UvrB is released. If no lesion is found, the DNA wraps around the other UvrB subunit that will check the other stand for damage. This chain is UvrABC system protein B, found in Halobacterium salinarum (strain ATCC 700922 / JCM 11081 / NRC-1) (Halobacterium halobium).